Consider the following 1764-residue polypeptide: Latent-transforming growth factor beta-binding protein 2 (1764 aa).

Residues 1–35 form the signal peptide; sequence MRAPTTVRCSGRIQRARWRGFLPLVLALLMGTSHA. The interval 80–140 is disordered; the sequence is PGLSPSEWNQ…PPAARTAHSV (61 aa). The segment at 94-115 is heparin-binding; sequence IPGRLAEAEARRPSRAQQLRRV. Residues 108–128 show a composition bias toward polar residues; the sequence is RAQQLRRVQSPVQTRRSNPRG. A glycan (N-linked (GlcNAc...) asparagine) is linked at Asn175. The region spanning 181-213 is the EGF-like 1 domain; sequence IKPVCQPPCQNRGSCSRPQLCICRSGFRGARCE. 3 cysteine pairs are disulfide-bonded: Cys185–Cys195, Cys189–Cys201, and Cys203–Cys212. The segment at 220–279 is disordered; it reads EFDPQNARPVPRRSVEGAPGPHRSSEARGSLVTRIQPLLPPLPPPPSRTLSQTRPLQQHA. The segment at 226–243 is heparin-binding; it reads ARPVPRRSVEGAPGPHRS. Positions 257–266 are enriched in pro residues; the sequence is LLPPLPPPPS. Asn330 carries an N-linked (GlcNAc...) asparagine glycan. Position 331 to 341 (331 to 341) interacts with heparin; the sequence is LTEKIKKIKVV. The region spanning 383-415 is the EGF-like 2 domain; the sequence is RIYFCQIPCLNGGRCIGRDECWCPANSTGKFCH. Intrachain disulfides connect Cys387-Cys397, Cys391-Cys403, and Cys405-Cys414. A glycan (N-linked (GlcNAc...) asparagine) is linked at Asn408. A disordered region spans residues 484-529; that stretch reads EVDPVPEDNSVETRASHRPHGSSGHSHWASNSIPARAGEAPRPPPV. The residue at position 493 (Ser493) is a Phosphoserine. The TB 1 domain maps to 538-590; sequence GQCYLSTVNGQCANPLGELTSQEDCCGSVGTSWGVTSCAPCPPRPAFPVIENG. 3 cysteine pairs are disulfide-bonded: Cys540/Cys562, Cys549/Cys575, and Cys563/Cys578. Asn602 carries N-linked (GlcNAc...) asparagine glycosylation. Residues 608-648 enclose the EGF-like 3; calcium-binding domain; it reads DINECLTLGLCKDSECVNTRGSYLCTCRPGLMLDPSRSRCV. Cystine bridges form between Cys612-Cys623, Cys618-Cys632, Cys634-Cys647, Cys660-Cys682, Cys669-Cys695, Cys683-Cys698, and Cys684-Cys710. One can recognise a TB 2 domain in the interval 658–710; sequence GLCYRSMVSGTCTLPLVQRITKQICCCSRVGKAWGSKCEHCPLPGTEAFREIC. Disordered stretches follow at residues 729 to 759 and 786 to 809; these read KAEEEELASPVREQRQQSSGPPPGAAERQPL and SAPHLPARVPGDATGRPTPSLPGQ. One can recognise an EGF-like 4 domain in the interval 834 to 876; that stretch reads GFDPCFAGASNICGPGTCVKLPNGYRCVCSPGYQLHPSQDYCT. Intrachain disulfides connect Cys838–Cys851, Cys846–Cys860, Cys862–Cys875, Cys881–Cys892, Cys886–Cys901, Cys903–Cys918, Cys924–Cys935, Cys930–Cys944, Cys946–Cys958, Cys964–Cys975, Cys970–Cys984, Cys987–Cys998, Cys1004–Cys1015, Cys1010–Cys1024, Cys1026–Cys1039, Cys1045–Cys1056, Cys1051–Cys1065, Cys1068–Cys1081, Cys1087–Cys1098, Cys1093–Cys1107, Cys1110–Cys1123, Cys1129–Cys1141, Cys1136–Cys1150, Cys1152–Cys1164, Cys1170–Cys1182, Cys1176–Cys1191, Cys1193–Cys1206, Cys1212–Cys1223, Cys1218–Cys1232, Cys1234–Cys1247, Cys1253–Cys1265, Cys1259–Cys1274, Cys1276–Cys1289, Cys1295–Cys1307, Cys1302–Cys1316, Cys1318–Cys1332, Cys1359–Cys1382, Cys1369–Cys1394, Cys1383–Cys1397, Cys1435–Cys1448, Cys1443–Cys1457, Cys1459–Cys1472, Cys1478–Cys1488, Cys1483–Cys1497, and Cys1499–Cys1512. The EGF-like 5; calcium-binding domain occupies 877-919; it reads DDNECLRNPCEGRGRCVNSVGSYSCLCYPGYTLATLGDTQECQ. One can recognise an EGF-like 6; calcium-binding domain in the interval 920-959; that stretch reads DVDECEQPGVCSGGRCSNTEGSYHCECDQGYVMVRRGHCQ. The 40-residue stretch at 960 to 999 folds into the EGF-like 7; calcium-binding domain; the sequence is DINECRHPGTCPDGRCVNSPGSYTCLACEEGYIGQSGNCV. The EGF-like 8; calcium-binding domain occupies 1000–1040; the sequence is DMNECLTPGICAHGRCINMEGSFRCSCEPGYELTPDKKGCR. One can recognise an EGF-like 9; calcium-binding domain in the interval 1041–1082; sequence DVDECASRASCPTGLCLNTEGSFTCSACQSGYWVNEDGTACE. The region spanning 1083 to 1124 is the EGF-like 10; calcium-binding domain; it reads DLDECAFPGVCPTGVCTNTVGSFSCKDCDRGFRPSPLGNSCE. The region spanning 1125-1165 is the EGF-like 11; calcium-binding domain; sequence DVDECEGPQNSCLGGECKNTDGSYQCLCPQGFQLANGTVCE. Asn1160 carries an N-linked (GlcNAc...) asparagine glycan. The EGF-like 12; calcium-binding domain maps to 1166-1207; sequence DVDECVGEEHCAPHGECLNSPGSFFCLCAPGFASAEGGTRCQ. One can recognise an EGF-like 13; calcium-binding domain in the interval 1208–1248; sequence DVDECATTEPCLGGHCVNTEGSFNCLCETGFQPAPDSGECV. The region spanning 1249-1290 is the EGF-like 15; calcium-binding domain; it reads DIDECANDTVCGNHGFCDNTDGSFRCLCDQGFETSPSGWECV. The N-linked (GlcNAc...) asparagine glycan is linked to Asn1255. Positions 1291–1333 constitute an EGF-like 16; calcium-binding domain; that stretch reads DVNECELMLAVCGDALCENVEGSFLCLCASDLEEYDAEEGHCR. The TB 3 domain maps to 1357-1409; the sequence is MECYAEHNGGPPCSQILGQNSTQAECCSTQGARWGETCDPCPSEDSVEFSELC. An N-linked (GlcNAc...) asparagine glycan is attached at Asn1376. The region spanning 1431–1473 is the EGF-like 17; calcium-binding domain; it reads DADECILFGPALCQNGRCLNTVPGYICLCNPGYHYDAVSRKCQ. Positions 1474-1513 constitute an EGF-like 18; calcium-binding domain; sequence DHNECQDLACENGECVNTEGSFHCFCSPPLILDLSGQRCV. Asn1514 carries an N-linked (GlcNAc...) asparagine glycan. One can recognise a TB 4 domain in the interval 1530-1582; that stretch reads DICWKKVTNDVCSQPLRGHHTTYTECCCQDGEAWSQQCALCPPRSSEVYAQLC. 10 disulfide bridges follow: Cys1532–Cys1555, Cys1541–Cys1567, Cys1556–Cys1570, Cys1557–Cys1582, Cys1680–Cys1691, Cys1686–Cys1700, Cys1702–Cys1715, Cys1721–Cys1736, Cys1731–Cys1745, and Cys1747–Cys1760. The C-terminal domain stretch occupies residues 1585–1764; the sequence is ARIEAEREAG…PGPPHCAAKE (180 aa). Positions 1676–1716 constitute an EGF-like 19; calcium-binding domain; that stretch reads QAEECGILNGCENGRCVRVREGYTCDCFEGFQLDTALMACV. Positions 1717–1761 constitute an EGF-like 20; calcium-binding domain; it reads DVNECEDLNGAARLCAHGHCENTEGSYRCHCSPGYVAEPGPPHCA.

This sequence belongs to the LTBP family. Forms part of the large latent transforming growth factor beta precursor complex; removal is essential for activation of complex. Interacts with SDC4. Interacts (via C-terminal domain) with FBN1 (via N-terminal domain) in a Ca(+2)-dependent manner. N-Glycosylated. Post-translationally, contains hydroxylated asparagine residues. As to expression, expressed in cortical astrocytes and glioma cells. Expression is up-regulated by TGFB1.

It is found in the secreted. Its subcellular location is the extracellular space. The protein resides in the extracellular matrix. May play an integral structural role in elastic-fiber architectural organization and/or assembly. In Rattus norvegicus (Rat), this protein is Latent-transforming growth factor beta-binding protein 2 (Ltbp2).